Here is a 121-residue protein sequence, read N- to C-terminus: MHSRLPTHAADLLQALSRLPRNAGRGLIWVYRHSFSALVGSNCRHLPTCSQYGDEAIGRFGLWAGGWMTLARLIRCNPYGTSGIDNVPETPPPGARWYLPWRYARWRGVNGPDCGCGHHDE.

Belongs to the UPF0161 family.

The protein resides in the cell inner membrane. Functionally, could be involved in insertion of integral membrane proteins into the membrane. The sequence is that of Putative membrane protein insertion efficiency factor from Rhodopseudomonas palustris (strain HaA2).